The following is a 173-amino-acid chain: MALGETITQNVFGGLSNDFKKKNFSLYGQWISIFTIFLCIALGIANIFHFNLVIIFSVICIVQGLIVIFVEVPFLLRICPLTDTFTNFIRKFDGNLPRCGFYLLNAVIQWLSCTLQATSLIVVAIFFTLASACYALAYAKNQEYLKSSIDVTGTGQGGALEAQVGEHVVRNVL.

Residue N23 is glycosylated (N-linked (GlcNAc...) asparagine). The next 4 helical transmembrane spans lie at 28–48, 50–70, 96–112, and 119–139; these read GQWI…ANIF, FNLV…VIFV, LPRC…QWLS, and SLIV…LAYA.

This sequence belongs to the TVP18 family.

The protein localises to the golgi apparatus membrane. In terms of biological role, golgi membrane protein involved in vesicular trafficking. The sequence is that of Golgi apparatus membrane protein TVP18 (TVP18) from Lodderomyces elongisporus (strain ATCC 11503 / CBS 2605 / JCM 1781 / NBRC 1676 / NRRL YB-4239) (Yeast).